A 371-amino-acid chain; its full sequence is Cytochrome b (371 aa).

4 consecutive transmembrane segments (helical) span residues 25–45 (FGSM…FLAV), 69–90 (WMMQ…YIHI), 105–125 (WLSG…XXXX), and 170–190 (XXXX…LHIM). The heme b site is built by His75 and His89. Heme b is bound by residues Xaa174 and His188. His193 is an a ubiquinone binding site. 4 helical membrane-spanning segments follow: residues 218 to 238 (YKDL…VSFL), 280 to 300 (LGGA…PFTH), 312 to 332 (IMQL…WAAT), and 339 to 358 (FTMI…ITNP).

The protein belongs to the cytochrome b family. As to quaternary structure, the cytochrome bc1 complex contains 3 respiratory subunits (MT-CYB, CYC1 and UQCRFS1), 2 core proteins (UQCRC1 and UQCRC2) and probably 6 low-molecular weight proteins. Requires heme b as cofactor.

The protein localises to the mitochondrion inner membrane. Its function is as follows. Component of the ubiquinol-cytochrome c reductase complex (complex III or cytochrome b-c1 complex) that is part of the mitochondrial respiratory chain. The b-c1 complex mediates electron transfer from ubiquinol to cytochrome c. Contributes to the generation of a proton gradient across the mitochondrial membrane that is then used for ATP synthesis. The protein is Cytochrome b (MT-CYB) of Eryx jaculus (Javelin sand boa).